We begin with the raw amino-acid sequence, 358 residues long: Replication-associated protein (358 aa).

One can recognise a CRESS-DNA virus Rep endonuclease domain in the interval 7-115 (RIQAKNVFLT…DGDTVEWGQF (109 aa)). The RCR-1 motif lies at 14-17 (FLTY). Residues Glu48, His56, and His58 each coordinate a divalent metal cation. Residues 56–58 (HLH) carry the RCR-2 motif. Residue Tyr102 is the For DNA cleavage activity of the active site. The short motif at 102-105 (YLDK) is the RCR-3 element. A divalent metal cation is bound at residue Asp106. The binding to RBR1 stretch occupies residues 142–152 (KSEALNVIREL). The oligomerization stretch occupies residues 155–175 (KDFVLQFHNLNSNLDRIFQEP). ATP is bound at residue 220–227 (GDSRTGKT).

This sequence belongs to the geminiviridae Rep protein family. In terms of assembly, homooligomer. Interacts with the replication enhancer protein (REn). Interacts with host retinoblastoma-related protein 1 (RBR1), and may thereby induce the transcription of host replicative enzymes even if the cell is not dividing anymore. Interacts with host PCNA. Interacts with host SCE1 protein. Mg(2+) is required as a cofactor. Mn(2+) serves as cofactor.

The protein resides in the host nucleus. In terms of biological role, essential for the replication of viral ssDNA. The closed circular ssDNA genome is first converted to a superhelical dsDNA. Rep binds a specific region at the genome origin of replication. It introduces an endonucleolytic nick within the conserved sequence 5'-TAATATTAC-3' in the intergenic region of the genome present in all geminiviruses, thereby initiating the rolling circle replication (RCR). Following cleavage, binds covalently to the 5'-phosphate of DNA as a tyrosyl ester. The cleavage gives rise to a free 3'-OH that serves as a primer for the cellular DNA polymerase. The polymerase synthesizes the (+) strand DNA by rolling circle mechanism. After one round of replication, a Rep-catalyzed nucleotidyl transfer reaction releases a circular single-stranded virus genome, thereby terminating the replication. Displays origin-specific DNA cleavage, nucleotidyl transferase, ATPase and helicase activities. The sequence is that of Replication-associated protein from Hewittia sublobata (Coralbush).